A 92-amino-acid chain; its full sequence is DNA-directed RNA polymerase subunit Rpo5 (92 aa).

Belongs to the archaeal Rpo5/eukaryotic RPB5 RNA polymerase subunit family. As to quaternary structure, part of the RNA polymerase complex.

It is found in the cytoplasm. The catalysed reaction is RNA(n) + a ribonucleoside 5'-triphosphate = RNA(n+1) + diphosphate. In terms of biological role, DNA-dependent RNA polymerase (RNAP) catalyzes the transcription of DNA into RNA using the four ribonucleoside triphosphates as substrates. This Methanopyrus kandleri (strain AV19 / DSM 6324 / JCM 9639 / NBRC 100938) protein is DNA-directed RNA polymerase subunit Rpo5.